The primary structure comprises 846 residues: Protein arginine N-methyltransferase 9 (846 aa).

3 TPR repeats span residues 25-58, 67-100, and 101-134; these read VARS…APEL, QYTL…FPDD, and EVIC…NPDF. SAM-dependent MTase PRMT-type domains follow at residues 137–466 and 530–846; these read AKEN…YLRI and NIPY…AVKP.

The protein belongs to the class I-like SAM-binding methyltransferase superfamily. Protein arginine N-methyltransferase family. Found in a complex with PRMT9, SF3B2 and SF3B4. Interacts with SF3B2.

The protein resides in the cytoplasm. The enzyme catalyses L-arginyl-[protein] + 2 S-adenosyl-L-methionine = N(omega),N(omega)'-dimethyl-L-arginyl-[protein] + 2 S-adenosyl-L-homocysteine + 2 H(+). In terms of biological role, arginine methyltransferase that can both catalyze the formation of omega-N monomethylarginine (MMA) and symmetrical dimethylarginine (sDMA). Specifically mediates the symmetrical dimethylation of SF3B2. Involved in the regulation of alternative splicing of pre-mRNA. This Mus musculus (Mouse) protein is Protein arginine N-methyltransferase 9 (Prmt9).